The primary structure comprises 1367 residues: Collagen alpha-1(XV) chain (1367 aa).

A signal peptide spans 1-31; it reads MTHRRTAQGRRPRWLLSIISALLSAVLQTRA. In terms of domain architecture, Laminin G-like spans 54–249; sequence SVSFTTGYGG…SSASGEASGF (196 aa). Positions 229–604 are nonhelical region 1 (NC1); it reads RTPEELCEAQ…DIVGNEDLLR (376 aa). Serine 243 and serine 247 each carry an O-linked (Xyl...) (chondroitin sulfate) serine glycan. The disordered stretch occupies residues 267–319; it reads APPKESHVDPISVPPTSSSPAEDSELSGEPVPEGTPETNLSIIGHSSPEQGSG. Residues asparagine 305 and asparagine 323 are each glycosylated (N-linked (GlcNAc...) asparagine). Serine 341 carries an O-linked (Xyl...) (chondroitin sulfate) serine glycan. N-linked (GlcNAc...) asparagine glycans are attached at residues asparagine 348, asparagine 375, and asparagine 402. Disordered regions lie at residues 396–446 and 529–784; these read DTPD…SHGE and TAEP…GHVE. Over residues 402-429 the composition is skewed to polar residues; it reads NLTTTASGDGEVPTSTDGDTEADSSPTG. Basic and acidic residues predominate over residues 434–446; it reads KPREEATLGSHGE. Positions 555–564 are enriched in pro residues; that stretch reads PSGPPLPTPT. Residues 582–595 are compositionally biased toward gly residues; sequence GPVGGLDEGSGSGD. 2 Collagen-like domains span residues 605 to 665 and 666 to 717; these read GPPG…GMKG and EKGA…PPGP. Positions 605–718 are triple-helical region 1 (COL1); it reads GPPGPPGPPG…PGPPGPPGPG (114 aa). A compositionally biased stretch (pro residues) spans 606–616; it reads PPGPPGPPGSP. Asparagine 673 carries an N-linked (GlcNAc...) asparagine glycan. The segment covering 703–717 has biased composition (pro residues); sequence MGPPGPPGPPGPPGP. Residues 719-748 are nonhelical region 2 (NC2); the sequence is CTTELGFEIEGSGDVRLLSKPTISGPTSPS. An O-linked (Xyl...) (chondroitin sulfate) serine glycan is attached at serine 730. Residues 737-750 show a composition bias toward low complexity; sequence SKPTISGPTSPSGP. Positions 749 to 783 are triple-helical region 2 (COL2); sequence GPKGEKGEQGAKGERGADGTSTMGPPGPRGPPGHV. Basic and acidic residues predominate over residues 751-765; that stretch reads KGEKGEQGAKGERGA. A nonhelical region 3 (NC3) region spans residues 784 to 807; it reads EVLSSSLINITNGSMNFSDIPELM. 3 N-linked (GlcNAc...) asparagine glycosylation sites follow: asparagine 792, asparagine 795, and asparagine 799. Collagen-like domains are found at residues 808–850 and 863–912; these read GPPG…GEPG and KGRK…GDRG. The tract at residues 808 to 852 is triple-helical region 3 (COL3); that stretch reads GPPGPDGVPGLPGFPGPRGPKGDTGVPGFPGLKGEQGEKGEPGAI. The interval 853–863 is nonhelical region 4 (NC4); the sequence is LTGDVPLEMMK. The interval 864–934 is triple-helical region 4 (COL4); sequence GRKGEPGIHG…PGPPGPPGAV (71 aa). The interval 905–930 is disordered; sequence KGAKGDRGVTLPGPPGLPGPPGPPGP. Positions 916–930 are enriched in pro residues; that stretch reads PGPPGLPGPPGPPGP. Residues 935 to 968 form a nonhelical region 5 (NC5) region; sequence VNIKGAVFPIPARPHCKTPVGTAHPGDPELVTFH. A triple-helical region 5 (COL5) region spans residues 969-998; the sequence is GVKGEKGSWGLPGSKGEKGDQGAQGPPGPP. Disordered regions lie at residues 974–1000 and 1055–1089; these read KGSW…PPVD and GPPG…PAIL. The nonhelical region 6 (NC6) stretch occupies residues 999-1031; it reads VDPAYLRHFLNSLKGENEDASFRGESSNNLFVS. A triple-helical region 6 (COL6) region spans residues 1032–1086; that stretch reads GPPGLPGYPGLVGQKGEAVVGPQGPPGIPGLPGPPGFGRPGVPGPPGPPGPPGPP. Positions 1055-1086 are enriched in pro residues; it reads GPPGIPGLPGPPGFGRPGVPGPPGPPGPPGPP. Residues 1087–1096 form a nonhelical region 7 (NC7) region; the sequence is AILGAAVALP. Positions 1097–1111 are triple-helical region 7 (COL7); it reads GPPGPPGQPGLPGSR. The nonhelical region 8 (NC8) stretch occupies residues 1112–1367; it reads NLVTALSDMG…ENSFMTDTRK (256 aa). 2 disulfides stabilise this stretch: cysteine 1216–cysteine 1356 and cysteine 1318–cysteine 1348.

Belongs to the multiplexin collagen family. Trimer; disulfide-linked. As to quaternary structure, interacts moderately with EFEMP2. In terms of processing, prolines at the third position of the tripeptide repeating unit (G-X-Y) are hydroxylated in some or all of the chains. Post-translationally, O-glycosylated; contains chondroitin sulfate. As to expression, detected in testis, brain, heart, kidney, skeletal muscle and skin (at protein level). Detected in heart and skeletal muscle.

The protein localises to the secreted. Its subcellular location is the extracellular space. It is found in the extracellular matrix. In terms of biological role, structural protein that stabilizes microvessels and muscle cells, both in heart and in skeletal muscle. Functionally, restin potently inhibits angiogenesis. This is Collagen alpha-1(XV) chain (Col15a1) from Mus musculus (Mouse).